A 261-amino-acid polypeptide reads, in one-letter code: Kallikrein-1 (261 aa).

An N-terminal signal peptide occupies residues 1–18 (MWFLILFLALSLGRNDAA). Residues 19–24 (PPVQSR) constitute a propeptide, activation peptide. The region spanning 25–258 (VVGGYNCEMN…FTPWIKEVMK (234 aa)) is the Peptidase S1 domain. Intrachain disulfides connect Cys31/Cys173, Cys50/Cys66, Cys152/Cys219, Cys184/Cys198, and Cys209/Cys234. Catalysis depends on His65, which acts as the Charge relay system. Asn108 carries N-linked (GlcNAc...) asparagine glycosylation. The Charge relay system role is filled by Asp120. Ser213 acts as the Charge relay system in catalysis.

Belongs to the peptidase S1 family. Kallikrein subfamily. In terms of tissue distribution, high levels in pancreas, submaxillary and parotid glands, spleen, and kidney.

It carries out the reaction Preferential cleavage of Arg-|-Xaa bonds in small molecule substrates. Highly selective action to release kallidin (lysyl-bradykinin) from kininogen involves hydrolysis of Met-|-Xaa or Leu-|-Xaa.. The sequence is that of Kallikrein-1 (Ngfg) from Rattus norvegicus (Rat).